The primary structure comprises 306 residues: Aspartate carbamoyltransferase catalytic subunit (306 aa).

Residues arginine 55 and threonine 56 each contribute to the carbamoyl phosphate site. Position 84 (lysine 84) interacts with L-aspartate. Carbamoyl phosphate contacts are provided by arginine 105, histidine 133, and glutamine 136. Residues arginine 166 and arginine 227 each coordinate L-aspartate. Carbamoyl phosphate is bound by residues leucine 265 and proline 266.

The protein belongs to the aspartate/ornithine carbamoyltransferase superfamily. ATCase family. As to quaternary structure, heterododecamer (2C3:3R2) of six catalytic PyrB chains organized as two trimers (C3), and six regulatory PyrI chains organized as three dimers (R2).

The catalysed reaction is carbamoyl phosphate + L-aspartate = N-carbamoyl-L-aspartate + phosphate + H(+). It functions in the pathway pyrimidine metabolism; UMP biosynthesis via de novo pathway; (S)-dihydroorotate from bicarbonate: step 2/3. Its function is as follows. Catalyzes the condensation of carbamoyl phosphate and aspartate to form carbamoyl aspartate and inorganic phosphate, the committed step in the de novo pyrimidine nucleotide biosynthesis pathway. This is Aspartate carbamoyltransferase catalytic subunit from Neisseria meningitidis serogroup C (strain 053442).